The chain runs to 642 residues: Tigger transposable element-derived protein 5 (642 aa).

2 stretches are compositionally biased toward pro residues: residues 1–10 (MYPAGPPAGP) and 19–43 (LPGPPAPAPAPVPAARPPPPAPGPR). The segment at 1 to 45 (MYPAGPPAGPVPRRGRRPLPGPPAPAPAPVPAARPPPPAPGPRPR) is disordered. Positions 47–98 (AVKMAFRKAYSIKDKLQAIERVKGGERQASVCRDFGVPGGTLRGWLKDEPKL) constitute an HTH psq-type domain. 2 consecutive DNA-binding regions (H-T-H motif) follow at residues 74-94 (QASVCRDFGVPGGTLRGWLKD) and 145-178 (PLIQAQAEAFARQIYGPECTFKASHGWFWRWQKR). An HTH CENPB-type domain is found at 112-185 (QRKKMRLANE…QKRHGISSQR (74 aa)). A disordered region spans residues 185–233 (RFYGEAGPPAPSPAPGPPVKEEPALPSGAGPLPDRAPAPPPPAEGGYGD). 2 stretches are compositionally biased toward pro residues: residues 192-202 (PPAPSPAPGPP) and 218-227 (DRAPAPPPPA). DDE-1 domains lie at 233–357 (DEQI…VLLV) and 410–477 (RAHI…ERCW). Positions 535–587 (LDDDGGPPEGCREEVGPALPPAAPPAPASLPSAMGGGEDEEEATDYGGTSVPT) are disordered. Residues 552-562 (ALPPAAPPAPA) show a composition bias toward pro residues.

The protein belongs to the tigger transposable element derived protein family.

The protein resides in the nucleus. In Homo sapiens (Human), this protein is Tigger transposable element-derived protein 5 (TIGD5).